Here is a 184-residue protein sequence, read N- to C-terminus: dCTP deaminase (184 aa).

DCTP is bound by residues 107 to 112 (KSTYAR), 131 to 133 (TLE), glutamine 152, tyrosine 166, and glutamine 176. The active-site Proton donor/acceptor is glutamate 133.

The protein belongs to the dCTP deaminase family. Homotrimer.

The enzyme catalyses dCTP + H2O + H(+) = dUTP + NH4(+). It participates in pyrimidine metabolism; dUMP biosynthesis; dUMP from dCTP (dUTP route): step 1/2. Catalyzes the deamination of dCTP to dUTP. This chain is dCTP deaminase, found in Paramagnetospirillum magneticum (strain ATCC 700264 / AMB-1) (Magnetospirillum magneticum).